Here is a 388-residue protein sequence, read N- to C-terminus: S-adenosylmethionine synthase (388 aa).

Histidine 17 lines the ATP pocket. Aspartate 19 contributes to the Mg(2+) binding site. Glutamate 45 serves as a coordination point for K(+). The L-methionine site is built by glutamate 58 and glutamine 102. The interval 102-112 is flexible loop; sequence QSADIAQGVDA. ATP contacts are provided by residues 167-169, 232-233, aspartate 241, 247-248, alanine 264, and lysine 268; these read DSK, RF, and RK. Aspartate 241 is a binding site for L-methionine. Lysine 272 contributes to the L-methionine binding site.

It belongs to the AdoMet synthase family. In terms of assembly, homotetramer; dimer of dimers. Requires Mg(2+) as cofactor. K(+) serves as cofactor.

Its subcellular location is the cytoplasm. The catalysed reaction is L-methionine + ATP + H2O = S-adenosyl-L-methionine + phosphate + diphosphate. It functions in the pathway amino-acid biosynthesis; S-adenosyl-L-methionine biosynthesis; S-adenosyl-L-methionine from L-methionine: step 1/1. Catalyzes the formation of S-adenosylmethionine (AdoMet) from methionine and ATP. The overall synthetic reaction is composed of two sequential steps, AdoMet formation and the subsequent tripolyphosphate hydrolysis which occurs prior to release of AdoMet from the enzyme. The sequence is that of S-adenosylmethionine synthase from Paramagnetospirillum magneticum (strain ATCC 700264 / AMB-1) (Magnetospirillum magneticum).